A 544-amino-acid chain; its full sequence is Chaperonin GroEL 3 (544 aa).

ATP is bound by residues 30 to 33, lysine 51, 87 to 91, glycine 415, and aspartate 496; these read TLGP and DGTTT.

This sequence belongs to the chaperonin (HSP60) family. As to quaternary structure, forms a cylinder of 14 subunits composed of two heptameric rings stacked back-to-back. Interacts with the co-chaperonin GroES.

The protein localises to the cytoplasm. It catalyses the reaction ATP + H2O + a folded polypeptide = ADP + phosphate + an unfolded polypeptide.. Its function is as follows. Together with its co-chaperonin GroES, plays an essential role in assisting protein folding. The GroEL-GroES system forms a nano-cage that allows encapsulation of the non-native substrate proteins and provides a physical environment optimized to promote and accelerate protein folding. This Rhizobium meliloti (strain 1021) (Ensifer meliloti) protein is Chaperonin GroEL 3.